The following is a 96-amino-acid chain: Protein Vpr (96 aa).

Positions 1 to 42 (MEQAPEDQGPQREPYNEWTLELLEELKSEAVRHFPRIWLHSL) are homooligomerization. Residues S79, S94, and S96 each carry the phosphoserine; by host modification.

The protein belongs to the HIV-1 VPR protein family. In terms of assembly, homooligomer, may form homodimer. Interacts with p6-gag region of the Pr55 Gag precursor protein through a (Leu-X-X)4 motif near the C-terminus of the P6gag protein. Interacts with host UNG. May interact with host RAD23A/HHR23A. Interacts with host VPRBP/DCAF1, leading to hijack the CUL4A-RBX1-DDB1-DCAF1/VPRBP complex, mediating ubiquitination of host proteins such as TERT and ZGPAT and arrest of the cell cycle in G2 phase. In terms of processing, phosphorylated on several residues by host. These phosphorylations regulate VPR activity for the nuclear import of the HIV-1 pre-integration complex.

Its subcellular location is the virion. The protein localises to the host nucleus. The protein resides in the host extracellular space. In terms of biological role, during virus replication, may deplete host UNG protein, and incude G2-M cell cycle arrest. Acts by targeting specific host proteins for degradation by the 26S proteasome, through association with the cellular CUL4A-DDB1 E3 ligase complex by direct interaction with host VPRPB/DCAF-1. Cell cycle arrest reportedly occurs within hours of infection and is not blocked by antiviral agents, suggesting that it is initiated by the VPR carried into the virion. Additionally, VPR induces apoptosis in a cell cycle dependent manner suggesting that these two effects are mechanistically linked. Detected in the serum and cerebrospinal fluid of AIDS patient, VPR may also induce cell death to bystander cells. Functionally, during virus entry, plays a role in the transport of the viral pre-integration (PIC) complex to the host nucleus. This function is crucial for viral infection of non-dividing macrophages. May act directly at the nuclear pore complex, by binding nucleoporins phenylalanine-glycine (FG)-repeat regions. This Homo sapiens (Human) protein is Protein Vpr.